Consider the following 280-residue polypeptide: tRNase Z TRZ1 (280 aa).

The protein belongs to the RNase Z family. In terms of assembly, homodimer. Zn(2+) is required as a cofactor. The cofactor is Ca(2+). Mn(2+) serves as cofactor. Requires Mg(2+) as cofactor.

It is found in the cytoplasm. The catalysed reaction is Endonucleolytic cleavage of RNA, removing extra 3' nucleotides from tRNA precursor, generating 3' termini of tRNAs. A 3'-hydroxy group is left at the tRNA terminus and a 5'-phosphoryl group is left at the trailer molecule.. Functionally, zinc phosphodiesterase, which displays tRNA 3'-processing endonuclease activity. Involved in tRNA maturation, by removing a 3'-trailer from precursor tRNA. Can use bis-(p-nitophenyl) phosphate (bpNPP) as substrate. Involved in the processing of small nucleolar RNAs (snoRNAs). The protein is tRNase Z TRZ1 of Arabidopsis thaliana (Mouse-ear cress).